A 257-amino-acid polypeptide reads, in one-letter code: Diaminopimelate epimerase (257 aa).

Substrate-binding residues include asparagine 13, glutamine 46, and asparagine 66. Cysteine 75 functions as the Proton donor in the catalytic mechanism. Substrate-binding positions include 76–77, asparagine 145, asparagine 175, and 193–194; these read GN and ER. Cysteine 202 (proton acceptor) is an active-site residue. Position 203–204 (203–204) interacts with substrate; sequence GS.

The protein belongs to the diaminopimelate epimerase family. As to quaternary structure, homodimer.

Its subcellular location is the cytoplasm. The catalysed reaction is (2S,6S)-2,6-diaminopimelate = meso-2,6-diaminopimelate. The protein operates within amino-acid biosynthesis; L-lysine biosynthesis via DAP pathway; DL-2,6-diaminopimelate from LL-2,6-diaminopimelate: step 1/1. Functionally, catalyzes the stereoinversion of LL-2,6-diaminopimelate (L,L-DAP) to meso-diaminopimelate (meso-DAP), a precursor of L-lysine and an essential component of the bacterial peptidoglycan. This chain is Diaminopimelate epimerase, found in Gluconobacter oxydans (strain 621H) (Gluconobacter suboxydans).